A 526-amino-acid chain; its full sequence is Hyaluronidase-5 (526 aa).

An N-terminal signal peptide occupies residues 1–35 (MRVLYFKHSFFRSLLKSNGLPQTLLVFLLIPCYLT). 5 cysteine pairs are disulfide-bonded: Cys60–Cys351, Cys223–Cys237, Cys376–Cys387, Cys381–Cys435, and Cys437–Cys443. The active-site Proton donor is Glu147. N-linked (GlcNAc...) asparagine glycans are attached at residues Asn165 and Asn179.

The protein belongs to the glycosyl hydrolase 56 family. As to expression, expressed in testis, epididymal sperm and epididymides (at protein level). Expressed at highest levels in testis with lesser amounts in epididymal sperm.

The protein resides in the cell membrane. It is found in the cytoplasmic vesicle. Its subcellular location is the secretory vesicle. The protein localises to the acrosome membrane. It localises to the secreted. The enzyme catalyses Random hydrolysis of (1-&gt;4)-linkages between N-acetyl-beta-D-glucosamine and D-glucuronate residues in hyaluronate.. In terms of biological role, catalyzes the hydrolysis of hyaluronan into smaller oligosaccharide fragments. Does not appear to be essential for fertilization. The polypeptide is Hyaluronidase-5 (Mus musculus (Mouse)).